The chain runs to 299 residues: Oxygen-dependent coproporphyrinogen-III oxidase (299 aa).

Residue serine 92 participates in substrate binding. Positions 96 and 106 each coordinate a divalent metal cation. Histidine 106 serves as the catalytic Proton donor. Residue 108–110 participates in substrate binding; sequence NVR. The a divalent metal cation site is built by histidine 145 and histidine 175. Residues 240–275 are important for dimerization; sequence YVEFNLVWDRGTLFGLQTGGRTESILMSMPPLVRWE. A substrate-binding site is contributed by 258-260; that stretch reads GGR.

The protein belongs to the aerobic coproporphyrinogen-III oxidase family. As to quaternary structure, homodimer. It depends on a divalent metal cation as a cofactor.

Its subcellular location is the cytoplasm. The enzyme catalyses coproporphyrinogen III + O2 + 2 H(+) = protoporphyrinogen IX + 2 CO2 + 2 H2O. It functions in the pathway porphyrin-containing compound metabolism; protoporphyrin-IX biosynthesis; protoporphyrinogen-IX from coproporphyrinogen-III (O2 route): step 1/1. In terms of biological role, involved in the heme biosynthesis. Catalyzes the aerobic oxidative decarboxylation of propionate groups of rings A and B of coproporphyrinogen-III to yield the vinyl groups in protoporphyrinogen-IX. The chain is Oxygen-dependent coproporphyrinogen-III oxidase from Salmonella paratyphi B (strain ATCC BAA-1250 / SPB7).